The following is a 49-amino-acid chain: Large ribosomal subunit protein bL33C (49 aa).

Belongs to the bacterial ribosomal protein bL33 family.

This chain is Large ribosomal subunit protein bL33C, found in Bacillus pumilus (strain SAFR-032).